The primary structure comprises 72 residues: Conotoxin VnMKLT2-021 (72 aa).

The signal sequence occupies residues 1-22 (MKLTCVLIVAVLFLTACQLTTA). A propeptide spanning residues 23–45 (ASYARSERQHPDLGSSDQNSKLT) is cleaved from the precursor. Cystine bridges form between Cys-48-Cys-62, Cys-55-Cys-66, and Cys-61-Cys-71.

The protein belongs to the conotoxin O1 superfamily. In terms of tissue distribution, expressed by the venom duct.

It is found in the secreted. The chain is Conotoxin VnMKLT2-021 from Conus ventricosus (Mediterranean cone).